A 148-amino-acid chain; its full sequence is UPF0756 membrane protein ESA_02180 (148 aa).

Transmembrane regions (helical) follow at residues 4–24 (ITLL…NMAV), 51–71 (VTVG…SGTL), 86–106 (LVAI…VALM), and 112–132 (IVAG…GVPV).

This sequence belongs to the UPF0756 family.

The protein localises to the cell membrane. The sequence is that of UPF0756 membrane protein ESA_02180 from Cronobacter sakazakii (strain ATCC BAA-894) (Enterobacter sakazakii).